A 188-amino-acid chain; its full sequence is Early nodulin-like protein 5 (188 aa).

The signal sequence occupies residues 1 to 24 (MDSSKKIIIVMFLVTFYMFSCVSS). The region spanning 25 to 128 (TEFEVGGENG…GQKMIVKVME (104 aa)) is the Phytocyanin domain. C82 and C116 are oxidised to a cystine. Positions 127–157 (METESSTESPPPSSSSSSSSSSSLPASTPKA) are disordered. Over residues 129 to 155 (TESSTESPPPSSSSSSSSSSSLPASTP) the composition is skewed to low complexity. S170 carries GPI-anchor amidated serine lipidation. The propeptide at 171–188 (SSGFVVSAVLIVSVFGLV) is removed in mature form.

The protein belongs to the early nodulin-like (ENODL) family. As to expression, mostly expressed in leaves and flowers, and, to a lower extent, in stems.

It localises to the cell membrane. In terms of biological role, may act as a carbohydrate transporter. Mainly required for reproductive functions. The protein is Early nodulin-like protein 5 of Arabidopsis thaliana (Mouse-ear cress).